The primary structure comprises 113 residues: uncharacterized protein (113 aa).

A mitochondrion-targeting transit peptide spans 1–14 (MATRNALRIVSRRF). The tract at residues 41-79 (QKLARQGPGEQAAGSASEAKVAGATASASAESGPKVSED) is disordered. The span at 55 to 73 (SASEAKVAGATASASAESG) shows a compositional bias: low complexity.

The protein resides in the mitochondrion. This is an uncharacterized protein from Arabidopsis thaliana (Mouse-ear cress).